Reading from the N-terminus, the 153-residue chain is Selenoprotein F (153 aa).

A signal peptide spans 1–19 (MAGEVYLLWLLPLLQGLAS). A non-standard amino acid (selenocysteine) is located at residue selenocysteine 84.

It belongs to the selenoprotein M/F family. As to expression, higher levels in polster, prechordal plate, axis, otic vesicle and somites. Lower levels in fin buds.

It is found in the endoplasmic reticulum lumen. Its function is as follows. May be involved in redox reactions associated with the formation of disulfide bonds. May contribute to the quality control of protein folding in the endoplasmic reticulum. The chain is Selenoprotein F from Danio rerio (Zebrafish).